Consider the following 74-residue polypeptide: UPF0435 protein BcerKBAB4_0386 (74 aa).

The protein belongs to the UPF0435 family.

This is UPF0435 protein BcerKBAB4_0386 from Bacillus mycoides (strain KBAB4) (Bacillus weihenstephanensis).